A 1127-amino-acid chain; its full sequence is Genome polyprotein (1127 aa).

The interaction with host EXOC1 stretch occupies residues 1-15 (MNNQRKKARSTPFNM). The Cytoplasmic segment spans residues 1–101 (MNNQRKKARS…LNILNRRRRT (101 aa)). A hydrophobic; homodimerization of capsid protein C region spans residues 37 to 72 (MLQGRGPLKLFMALVALPRFLTIPPTAGILKRWGTI). Residues 101–114 (TAGVIIMLIPTVMA) constitute a propeptide, ER anchor for the capsid protein C, removed in mature form by serine protease NS3. The chain crosses the membrane as a helical span at residues 102–122 (AGVIIMLIPTVMAFHLTTRNG). At 123–238 (EPHMIVSRQE…GAWKRACRME (116 aa)) the chain is on the extracellular side. An N-linked (GlcNAc...) asparagine; by host glycan is attached at Asn183. Residues 239-259 (TWILRHPGFTIMAAILAYTIG) form a helical membrane-spanning segment. Residues 260–265 (TTHFQR) are Cytoplasmic-facing. The chain crosses the membrane as a helical span at residues 266 to 280 (GLILILQTAVAPSMT). The Extracellular portion of the chain corresponds to 281–725 (MRCIGISNRD…LHQVFGAIYG (445 aa)). Intrachain disulfides connect Cys283-Cys310, Cys340-Cys401, Cys354-Cys385, and Cys372-Cys396. The N-linked (GlcNAc...) asparagine; by host glycan is linked to Asn347. The segment at 378–391 (DRGWGNGCGLFGKG) is fusion peptide. Residue Asn433 is glycosylated (N-linked (GlcNAc...) asparagine; by host). Disulfide bonds link Cys465/Cys565 and Cys582/Cys613. The chain crosses the membrane as a helical span at residues 726–746 (AAFSGVSWTMKILIGVIITWI). Residues 747 to 754 (GMNSRSTS) lie on the Cytoplasmic side of the membrane. A helical transmembrane segment spans residues 755–773 (LSVSLVLVGVITLYLGAMV). Residues 774 to 1127 (QADSGCVVSW…ENLVTSLVTA (354 aa)) are Extracellular-facing. Disulfide bonds link Cys779–Cys790, Cys830–Cys918, Cys954–Cys998, Cys1055–Cys1104, and Cys1066–Cys1088. N-linked (GlcNAc...) asparagine; by host glycans are attached at residues Asn905 and Asn982.

Homodimer. Interacts (via N-terminus) with host EXOC1 (via C-terminus); this interaction results in EXOC1 degradation through the proteasome degradation pathway. In terms of assembly, forms heterodimers with envelope protein E in the endoplasmic reticulum and Golgi. As to quaternary structure, homodimer; in the endoplasmic reticulum and Golgi. Interacts with protein prM. Interacts with non-structural protein 1. Homodimer; Homohexamer when secreted. Interacts with envelope protein E. Specific enzymatic cleavages in vivo yield mature proteins. Cleavages in the lumen of endoplasmic reticulum are performed by host signal peptidase, wereas cleavages in the cytoplasmic side are performed by the Serine protease NS3. Signal cleavage at the 2K-4B site requires a prior NS3 protease-mediated cleavage at the 4A-2K site. Post-translationally, cleaved in post-Golgi vesicles by a host furin, releasing the mature small envelope protein M, and peptide pr. This cleavage is incomplete as up to 30% of viral particles still carry uncleaved prM. In terms of processing, N-glycosylated. N-glycosylated. The excreted form is glycosylated and this is required for efficient secretion of the protein from infected cells.

The protein resides in the virion. It localises to the host nucleus. The protein localises to the host cytoplasm. Its subcellular location is the host perinuclear region. It is found in the secreted. The protein resides in the virion membrane. It localises to the host endoplasmic reticulum membrane. Its function is as follows. Plays a role in virus budding by binding to the cell membrane and gathering the viral RNA into a nucleocapsid that forms the core of a mature virus particle. During virus entry, may induce genome penetration into the host cytoplasm after hemifusion induced by the surface proteins. Can migrate to the cell nucleus where it modulates host functions. Overcomes the anti-viral effects of host EXOC1 by sequestering and degrading the latter through the proteasome degradation pathway. Functionally, inhibits RNA silencing by interfering with host Dicer. Prevents premature fusion activity of envelope proteins in trans-Golgi by binding to envelope protein E at pH6.0. After virion release in extracellular space, gets dissociated from E dimers. In terms of biological role, acts as a chaperone for envelope protein E during intracellular virion assembly by masking and inactivating envelope protein E fusion peptide. prM is the only viral peptide matured by host furin in the trans-Golgi network probably to avoid catastrophic activation of the viral fusion activity in acidic GolGi compartment prior to virion release. prM-E cleavage is inefficient, and many virions are only partially matured. These uncleaved prM would play a role in immune evasion. Its function is as follows. May play a role in virus budding. Exerts cytotoxic effects by activating a mitochondrial apoptotic pathway through M ectodomain. May display a viroporin activity. Functionally, binds to host cell surface receptor and mediates fusion between viral and cellular membranes. Envelope protein is synthesized in the endoplasmic reticulum in the form of heterodimer with protein prM. They play a role in virion budding in the ER, and the newly formed immature particle is covered with 60 spikes composed of heterodimer between precursor prM and envelope protein E. The virion is transported to the Golgi apparatus where the low pH causes dissociation of PrM-E heterodimers and formation of E homodimers. prM-E cleavage is inefficient, and many virions are only partially matured. These uncleaved prM would play a role in immune evasion. Involved in immune evasion, pathogenesis and viral replication. Once cleaved off the polyprotein, is targeted to three destinations: the viral replication cycle, the plasma membrane and the extracellular compartment. Essential for viral replication. Required for formation of the replication complex and recruitment of other non-structural proteins to the ER-derived membrane structures. Excreted as a hexameric lipoparticle that plays a role against host immune response. Antagonizing the complement function. Binds to the host macrophages and dendritic cells. Inhibits signal transduction originating from Toll-like receptor 3 (TLR3). In terms of biological role, disrupts the host endothelial glycocalyx layer of host pulmonary microvascular endothelial cells, inducing degradation of sialic acid and shedding of heparan sulfate proteoglycans. NS1 induces expression of sialidases, heparanase, and activates cathepsin L, which activates heparanase via enzymatic cleavage. These effects are probably linked to the endothelial hyperpermeability observed in severe dengue disease. This is Genome polyprotein from Dengue virus type 2 (strain China/D2-04) (DENV-2).